A 478-amino-acid chain; its full sequence is uncharacterized protein (478 aa).

This is an uncharacterized protein from Schizosaccharomyces pombe (strain 972 / ATCC 24843) (Fission yeast).